The following is a 401-amino-acid chain: Glucose/mannose transporter GlcP (401 aa).

A run of 12 helical transmembrane segments spans residues 11-31 (AFFF…PFLL), 43-63 (VIIF…PLMI), 78-98 (IMLV…IIVM), 99-119 (AFLL…FVIA), 132-152 (EVLF…FIDI), 156-176 (FLPY…WLIF), 212-232 (LGFF…FANF), 247-267 (LISV…IGFV), 278-298 (LFSC…SNPI), 306-326 (LIGL…SIII), 336-356 (LFIA…GWSL), and 360-380 (TILL…GISV).

The protein belongs to the major facilitator superfamily.

The protein resides in the cell membrane. Functionally, can transport glucose, mannose, 2-deoxyglucose and methyl alpha-glucoside, but not galactose. In Bacillus subtilis (strain 168), this protein is Glucose/mannose transporter GlcP (glcP).